The chain runs to 131 residues: Peptide methionine sulfoxide reductase MsrB (131 aa).

The 123-residue stretch at 8–130 (LEEWRAMLDP…NSVCLDLVPR (123 aa)) folds into the MsrB domain. Residues Cys-47, Cys-50, Cys-96, and Cys-99 each coordinate Zn(2+). Residue Cys-119 is the Nucleophile of the active site.

Belongs to the MsrB Met sulfoxide reductase family. The cofactor is Zn(2+).

It carries out the reaction L-methionyl-[protein] + [thioredoxin]-disulfide + H2O = L-methionyl-(R)-S-oxide-[protein] + [thioredoxin]-dithiol. This is Peptide methionine sulfoxide reductase MsrB from Pseudomonas fluorescens (strain Pf0-1).